Consider the following 103-residue polypeptide: Iron-sulfur cluster assembly protein CyaY (103 aa).

It belongs to the frataxin family.

Functionally, involved in iron-sulfur (Fe-S) cluster assembly. May act as a regulator of Fe-S biogenesis. This Rickettsia peacockii (strain Rustic) protein is Iron-sulfur cluster assembly protein CyaY.